Consider the following 145-residue polypeptide: Immune protein Tsi3 (145 aa).

Positions 1 to 15 are cleaved as a signal peptide; that stretch reads MKTVALILASLALLA. A lipid anchor (N-palmitoyl cysteine) is attached at Cys16. Residue Cys16 is the site of S-diacylglycerol cysteine attachment. Residues 53 to 85 are disordered; the sequence is FDEGGKLRNPRQLEVQRQDAPPPPDLASRRLGD. Glu126 serves as a coordination point for Ca(2+).

In terms of assembly, forms a heterotetramer with Tse3 consisting of two Tse3 dimers and two Tsi3 dimers. Formation of the complex inactivates Tse3 enzymatic activity.

Its function is as follows. Immunity protein that plays a role in preventing early activation of toxin Tse3. Occupies Tse3 substrate binding site and prevents the substrate from entering. The chain is Immune protein Tsi3 from Pseudomonas aeruginosa (strain ATCC 15692 / DSM 22644 / CIP 104116 / JCM 14847 / LMG 12228 / 1C / PRS 101 / PAO1).